The primary structure comprises 562 residues: Dihydroxy-acid dehydratase (562 aa).

Position 78 (Asp78) interacts with Mg(2+). Cys119 contributes to the [2Fe-2S] cluster binding site. Mg(2+) contacts are provided by Asp120 and Lys121. An N6-carboxylysine modification is found at Lys121. Residue Cys192 coordinates [2Fe-2S] cluster. Position 450 (Glu450) interacts with Mg(2+). Catalysis depends on Ser476, which acts as the Proton acceptor.

This sequence belongs to the IlvD/Edd family. Homodimer. Requires [2Fe-2S] cluster as cofactor. It depends on Mg(2+) as a cofactor.

It catalyses the reaction (2R)-2,3-dihydroxy-3-methylbutanoate = 3-methyl-2-oxobutanoate + H2O. It carries out the reaction (2R,3R)-2,3-dihydroxy-3-methylpentanoate = (S)-3-methyl-2-oxopentanoate + H2O. Its pathway is amino-acid biosynthesis; L-isoleucine biosynthesis; L-isoleucine from 2-oxobutanoate: step 3/4. It functions in the pathway amino-acid biosynthesis; L-valine biosynthesis; L-valine from pyruvate: step 3/4. Functions in the biosynthesis of branched-chain amino acids. Catalyzes the dehydration of (2R,3R)-2,3-dihydroxy-3-methylpentanoate (2,3-dihydroxy-3-methylvalerate) into 2-oxo-3-methylpentanoate (2-oxo-3-methylvalerate) and of (2R)-2,3-dihydroxy-3-methylbutanoate (2,3-dihydroxyisovalerate) into 2-oxo-3-methylbutanoate (2-oxoisovalerate), the penultimate precursor to L-isoleucine and L-valine, respectively. The protein is Dihydroxy-acid dehydratase of Nautilia profundicola (strain ATCC BAA-1463 / DSM 18972 / AmH).